A 296-amino-acid chain; its full sequence is Polyadenylate-binding protein 2-A (296 aa).

Residues 1–106 (MAAVSSVASL…GELTGDQTIE (106 aa)) form a disordered region. Positions 71–82 (GRGGSGGGGAGG) are enriched in gly residues. The span at 84-97 (EELEDEELEEEEPG) shows a compositional bias: acidic residues. Positions 107–141 (DPELEAIKARVREMEEEAEKLKELQNEVEKQMNMS) form a coiled coil. A necessary for homooligomerization region spans residues 146-296 (NAGPVIMSVE…ARATSWYTPY (151 aa)). Residues 163–240 (RSIYVGNVDY…RQIKVVPKRT (78 aa)) enclose the RRM domain.

In terms of assembly, monomer and homooligomer. Binds RNA as a monomer and oligomerizes when bound to poly(A). As to expression, shows dynamic spatial expression throughout development. First expressed in the animal pole region of the egg and this pattern persists through to the blastula stage. In gastrula and neurula embryos, expressed mainly in ectodermal, neural and epidermal regions. Neural tissue-specific expression pattern persists into tailbud stage when expression is localized to the brain and spinal cord. At early tadpole stage, expression becomes gradually confined to the specific vesicle regions of the developing brain. At stage 39, expressed in the telencephalon and mesencephalon regions of the brain. Also detected in the eye and olfactory pit at the tadpole stage. Expressed during gut endoderm development. At stage 35, expressed exclusively in the anterior portion of the gut endoderm, which includes the prospective liver, stomach and pancreas. As development proceeds, expression becomes restricted to the pancreas, and by stage 46/47 (the seventh day of development) expression is localized exclusively to the pancreas. Expressed in most adult tissues.

The protein localises to the nucleus. Its subcellular location is the cytoplasm. Its function is as follows. Involved in the 3'-end formation of mRNA precursors (pre-mRNA) by the addition of a poly(A) tail of 200-250 nt to the upstream cleavage product. Stimulates poly(A) polymerase (PAPOLA) conferring processivity on the poly(A) tail elongation reaction and also controls the poly(A) tail length. Increases the affinity of poly(A) polymerase for RNA. Binds to poly(A) and to poly(G) with high affinity. May protect the poly(A) tail from degradation. In Xenopus laevis (African clawed frog), this protein is Polyadenylate-binding protein 2-A (pabpn1-a).